Consider the following 260-residue polypeptide: 21S rRNA pseudouridine(2819) synthase (260 aa).

Asp-68 is a catalytic residue.

Belongs to the pseudouridine synthase RluA family.

It localises to the mitochondrion. The catalysed reaction is uridine(2819) in 21S rRNA = pseudouridine(2819) in 21S rRNA. Its function is as follows. Pseudouridylate synthase responsible for the pseudouridine-2819 formation in mitochondrial 21S rRNA. May modulate the efficiency or the fidelity of the mitochondrial translation machinery. In Eremothecium gossypii (strain ATCC 10895 / CBS 109.51 / FGSC 9923 / NRRL Y-1056) (Yeast), this protein is 21S rRNA pseudouridine(2819) synthase (PUS5).